Here is a 984-residue protein sequence, read N- to C-terminus: Valine--tRNA ligase (984 aa).

Positions 65–75 (PNVTGSLHMGH) match the 'HIGH' region motif. Residues 579–583 (KMSKS) carry the 'KMSKS' region motif. ATP is bound at residue lysine 582. The stretch at 954–984 (VEVVDAEKAKLAELEGQLTAMTAQMEELKNL) forms a coiled coil.

This sequence belongs to the class-I aminoacyl-tRNA synthetase family. ValS type 1 subfamily. As to quaternary structure, monomer.

It is found in the cytoplasm. It carries out the reaction tRNA(Val) + L-valine + ATP = L-valyl-tRNA(Val) + AMP + diphosphate. Functionally, catalyzes the attachment of valine to tRNA(Val). As ValRS can inadvertently accommodate and process structurally similar amino acids such as threonine, to avoid such errors, it has a 'posttransfer' editing activity that hydrolyzes mischarged Thr-tRNA(Val) in a tRNA-dependent manner. The sequence is that of Valine--tRNA ligase from Psychrobacter arcticus (strain DSM 17307 / VKM B-2377 / 273-4).